We begin with the raw amino-acid sequence, 170 residues long: Large ribosomal subunit protein uL10 (170 aa).

Belongs to the universal ribosomal protein uL10 family. In terms of assembly, part of the ribosomal stalk of the 50S ribosomal subunit. The N-terminus interacts with L11 and the large rRNA to form the base of the stalk. The C-terminus forms an elongated spine to which L12 dimers bind in a sequential fashion forming a multimeric L10(L12)X complex.

Its function is as follows. Forms part of the ribosomal stalk, playing a central role in the interaction of the ribosome with GTP-bound translation factors. The sequence is that of Large ribosomal subunit protein uL10 from Chlamydia felis (strain Fe/C-56) (Chlamydophila felis).